The chain runs to 504 residues: Maturase K (504 aa).

This sequence belongs to the intron maturase 2 family. MatK subfamily.

The protein resides in the plastid. Its subcellular location is the chloroplast. Functionally, usually encoded in the trnK tRNA gene intron. Probably assists in splicing its own and other chloroplast group II introns. In Arabidopsis lyrata (Lyre-leaved rock-cress), this protein is Maturase K.